A 957-amino-acid chain; its full sequence is Glutamyl aminopeptidase (957 aa).

Residues 1-18 are Cytoplasmic-facing; sequence MNFAEREGSKRYCIQTKH. A helical; Signal-anchor for type II membrane protein membrane pass occupies residues 19–39; sequence VAILCAVVVGVGLIVGLAVGL. Over 40–957 the chain is Extracellular; the sequence is TRSCDSSGDG…EWFFNLLESG (918 aa). The tract at residues 44–83 is disordered; sequence DSSGDGGPGTAPAPSHLPSSTASPSGPPAQDQDICPASED. The N-linked (GlcNAc...) asparagine; atypical glycan is linked to Asn-98. Residues Asn-124 and Asn-197 are each glycosylated (N-linked (GlcNAc...) asparagine). Glu-223 contacts substrate. Asn-324 and Asn-340 each carry an N-linked (GlcNAc...) asparagine glycan. Position 357 to 361 (357 to 361) interacts with substrate; that stretch reads GAMEN. His-393 provides a ligand contact to Zn(2+). The active-site Proton acceptor is the Glu-394. 2 residues coordinate Zn(2+): His-397 and Glu-416. N-linked (GlcNAc...) asparagine glycans are attached at residues Asn-554, Asn-589, Asn-597, Asn-607, Asn-678, Asn-763, Asn-773, Asn-801, and Asn-828. Arg-887 contributes to the substrate binding site.

This sequence belongs to the peptidase M1 family. Homodimer; disulfide-linked. It depends on Zn(2+) as a cofactor. Expressed in choriocarcinoma cancer cell lines (at protein level). Expressed by epithelial cells of the proximal tubule cells and the glomerulus of the nephron. Also found in a variety of other tissues.

The protein resides in the cell membrane. The enzyme catalyses Release of N-terminal glutamate (and to a lesser extent aspartate) from a peptide.. Substrate specificity is modulated by calcium which enhances the enzymatic activity for cleavage of acidic residues while reducing its activity with basic residues. Inhibited by aminopeptidase inhibitors amastatin and bestatin. In terms of biological role, regulates central hypertension through its calcium-modulated preference to cleave N-terminal acidic residues from peptides such as angiotensin II. This Homo sapiens (Human) protein is Glutamyl aminopeptidase (ENPEP).